The sequence spans 250 residues: Triosephosphate isomerase (250 aa).

9-11 provides a ligand contact to substrate; that stretch reads NWK. His95 serves as the catalytic Electrophile. Glu167 (proton acceptor) is an active-site residue. Substrate is bound by residues Gly173, Ser213, and 234–235; that span reads GG.

It belongs to the triosephosphate isomerase family. As to quaternary structure, homodimer.

It localises to the cytoplasm. It carries out the reaction D-glyceraldehyde 3-phosphate = dihydroxyacetone phosphate. Its pathway is carbohydrate biosynthesis; gluconeogenesis. The protein operates within carbohydrate degradation; glycolysis; D-glyceraldehyde 3-phosphate from glycerone phosphate: step 1/1. In terms of biological role, involved in the gluconeogenesis. Catalyzes stereospecifically the conversion of dihydroxyacetone phosphate (DHAP) to D-glyceraldehyde-3-phosphate (G3P). This Herpetosiphon aurantiacus (strain ATCC 23779 / DSM 785 / 114-95) protein is Triosephosphate isomerase.